Consider the following 205-residue polypeptide: Thymidylate kinase (205 aa).

ATP is bound at residue 10–17 (GIDGAGKS).

Belongs to the thymidylate kinase family.

It catalyses the reaction dTMP + ATP = dTDP + ADP. Functionally, phosphorylation of dTMP to form dTDP in both de novo and salvage pathways of dTTP synthesis. In Ralstonia nicotianae (strain ATCC BAA-1114 / GMI1000) (Ralstonia solanacearum), this protein is Thymidylate kinase.